The primary structure comprises 64 residues: Potassium channel toxin alpha-KTx J123 (64 aa).

Residues 1 to 21 (MNKVYLVAVLVLFLALTINES) form the signal peptide. 3 cysteine pairs are disulfide-bonded: Cys30/Cys52, Cys37/Cys60, and Cys41/Cys62.

The protein belongs to the short scorpion toxin superfamily. Potassium channel inhibitor family. Alpha-KTx 11 subfamily. Expressed by the venom gland.

It is found in the secreted. This recombinant toxin inhibits mammalian voltage-gated potassium channels Kv1.3/KCNA3 (IC(50)=0.79 nM) and Kv1.2/KCNA2 (IC(50)=26.4 nM). In Olivierus martensii (Manchurian scorpion), this protein is Potassium channel toxin alpha-KTx J123.